A 1482-amino-acid polypeptide reads, in one-letter code: Chromosome partition protein MukB (1482 aa).

34 to 41 contributes to the ATP binding site; it reads GGNGAGKS. Coiled coils occupy residues 337-468, 509-604, 780-805, 835-1044, 1070-1115, and 1210-1265; these read LNLV…LSVA, QHLA…APIW, RAAR…ATLS, EAEI…ELVD, TNRA…TAKA, and EAIE…LQAV. The segment at 666–783 is flexible hinge; it reads PGGAEDQRLV…AVPLFGRAAR (118 aa).

This sequence belongs to the SMC family. MukB subfamily. As to quaternary structure, homodimerization via its hinge domain. Binds to DNA via its C-terminal region. Interacts, and probably forms a ternary complex, with MukE and MukF via its C-terminal region. The complex formation is stimulated by calcium or magnesium. Interacts with tubulin-related protein FtsZ.

Its subcellular location is the cytoplasm. It localises to the nucleoid. Its function is as follows. Plays a central role in chromosome condensation, segregation and cell cycle progression. Functions as a homodimer, which is essential for chromosome partition. Involved in negative DNA supercoiling in vivo, and by this means organize and compact chromosomes. May achieve or facilitate chromosome segregation by condensation DNA from both sides of a centrally located replisome during cell division. The protein is Chromosome partition protein MukB of Serratia proteamaculans (strain 568).